We begin with the raw amino-acid sequence, 185 residues long: Threonylcarbamoyl-AMP synthase (185 aa).

The region spanning 4-185 (SFRAQCAARV…LVTGQVIRPA (182 aa)) is the YrdC-like domain.

The protein belongs to the SUA5 family. TsaC subfamily.

Its subcellular location is the cytoplasm. The enzyme catalyses L-threonine + hydrogencarbonate + ATP = L-threonylcarbamoyladenylate + diphosphate + H2O. Its function is as follows. Required for the formation of a threonylcarbamoyl group on adenosine at position 37 (t(6)A37) in tRNAs that read codons beginning with adenine. Catalyzes the conversion of L-threonine, HCO(3)(-)/CO(2) and ATP to give threonylcarbamoyl-AMP (TC-AMP) as the acyladenylate intermediate, with the release of diphosphate. The polypeptide is Threonylcarbamoyl-AMP synthase (Pseudomonas paraeruginosa (strain DSM 24068 / PA7) (Pseudomonas aeruginosa (strain PA7))).